Reading from the N-terminus, the 87-residue chain is Small ribosomal subunit protein bS20 (87 aa).

Over residues 1–11 (MANIKSAKKRA) the composition is skewed to basic residues. A disordered region spans residues 1–27 (MANIKSAKKRAVQSEKRRQHNASQRSM).

The protein belongs to the bacterial ribosomal protein bS20 family.

In terms of biological role, binds directly to 16S ribosomal RNA. The sequence is that of Small ribosomal subunit protein bS20 from Haemophilus influenzae (strain PittEE).